A 134-amino-acid polypeptide reads, in one-letter code: Small ribosomal subunit protein uS8c (134 aa).

In terms of assembly, component of the chloroplast small ribosomal subunit (SSU). Mature 70S chloroplast ribosomes of higher plants consist of a small (30S) and a large (50S) subunit. The 30S small subunit contains 1 molecule of ribosomal RNA (16S rRNA) and 24 different proteins. The 50S large subunit contains 3 rRNA molecules (23S, 5S and 4.5S rRNA) and 33 different proteins.

The protein resides in the plastid. Its subcellular location is the chloroplast. Its function is as follows. Component of the chloroplast ribosome (chloro-ribosome), a dedicated translation machinery responsible for the synthesis of chloroplast genome-encoded proteins, including proteins of the transcription and translation machinery and components of the photosynthetic apparatus. The polypeptide is Small ribosomal subunit protein uS8c (rps8) (Spinacia oleracea (Spinach)).